Reading from the N-terminus, the 2147-residue chain is Probable serine/threonine-protein kinase roco6 (2147 aa).

The Extracellular segment spans residues 1–1055 (MNSIHKQHYT…LDHSRVEFNR (1055 aa)). LRR repeat units follow at residues 69-89 (DMKYLDLSKRMIYSLELMMIP), 101-122 (SISILNLNDNLLGEIPESLKQL), 124-145 (QLISLSIRGNHILEIPLWFPEE), 148-169 (LLRKLDVSHNAISSVPNTFNKF), 171-192 (ILEDLNLSNNYISYIHPSLFPE), 193-214 (GIMRLNLSNNLFREVELPPWFE), 215-236 (SLLTLDISGNKLKHLGNLPFHL), 237-256 (VRVSIDDNHLESIDHKVILR), 306-328 (HLTHLDLSGNCISVLPPELANLT), 329-350 (ELVRLDLSFNILTTLPLYIVSY), and 352-372 (RLEHLDLQGTLDTLVSPPRRI). A Roc domain is found at 390 to 750 (QGEPSYRVKL…DLLKKTVVEL (361 aa)). Positions 390–750 (QGEPSYRVKL…DLLKKTVVEL (361 aa)) are small GTPase-like. 403 to 410 (GQENVGKT) is a binding site for GTP. Disordered regions lie at residues 491-582 (NSNG…VGTN) and 602-621 (SNLSIGGSNGNNNNNSGGSG). Low complexity-rich tracts occupy residues 492-512 (SNGVNSNSQININSSSGNIHS), 519-531 (NVNSSGGIHSNNS), 539-568 (NSFLNNTNSNGTNNNSSNLNINTNSNNVNS), and 602-617 (SNLSIGGSNGNNNNNS). Residues 634-638 (DCAGQ) and 691-694 (THLD) contribute to the GTP site. Residues 758-892 (PELYLKLEKL…RFELMFPLDS (135 aa)) enclose the COR domain. Low complexity-rich tracts occupy residues 905 to 941 (GNSYVNNNNNNNNNSNNNNNGSNKSSPFKTTPSSPST) and 960 to 977 (SGNNSSSKNSTSTKRSIS). Positions 905 to 995 (GNSYVNNNNN…NSDLDLIGGG (91 aa)) are disordered. Residues 1051–1098 (VEFNRWIQLSFAPAGLFSRLLIRLLISKEFDMKPILYWRNGVVVESQS) form a WD 1 repeat. The chain crosses the membrane as a helical span at residues 1056 to 1076 (WIQLSFAPAGLFSRLLIRLLI). The Cytoplasmic portion of the chain corresponds to 1077–2147 (SKEFDMKPIL…CGTNNVCIWS (1071 aa)). 3 LRR repeats span residues 1237-1263 (ILSIKPASFGNNQIQFEVRVPPSPPPP), 1274-1297 (DDNITTTTLAVNNIKVLESGGSQP), and 1325-1348 (ESSLIQVEFDHNNQTLVISGTYKY). The Protein kinase domain occupies 1356-1627 (FESPKLIGRG…KIVKRIKQII (272 aa)). ATP contacts are provided by residues 1362-1370 (IGRGASGKI) and Lys1383. Asp1481 acts as the Proton acceptor in catalysis. The interval 1653-1699 (ADSQPFHYHQQQQPSLNSTNQLQQQQYSSVLTSPRSNLSDSSNSSQN) is disordered. A compositionally biased stretch (low complexity) spans 1662–1699 (QQQQPSLNSTNQLQQQQYSSVLTSPRSNLSDSSNSSQN). WD repeat units follow at residues 1735–1774 (QPEAKVNQLVWEVNSRRVWGGCESGEIIVWNAENGNQIFR) and 1778–1820 (LHPG…LDDQ). The region spanning 1821-1923 (SGTKSDFITK…WLTAINRVIN (103 aa)) is the PH domain. The stretch at 2031 to 2068 (HYSKPITSMALVEKNVWISCEDESLSVWDGDTGSFIRK) is one WD 4 repeat.

It belongs to the protein kinase superfamily. TKL Ser/Thr protein kinase family. ROCO subfamily.

The protein localises to the membrane. It catalyses the reaction L-seryl-[protein] + ATP = O-phospho-L-seryl-[protein] + ADP + H(+). The catalysed reaction is L-threonyl-[protein] + ATP = O-phospho-L-threonyl-[protein] + ADP + H(+). Functionally, may act as a serine/threonine-protein kinase and guanine-nucleotide releasing factor. This is Probable serine/threonine-protein kinase roco6 (roco6) from Dictyostelium discoideum (Social amoeba).